The primary structure comprises 65 residues: DNA gyrase inhibitor YacG (65 aa).

Zn(2+) is bound by residues Cys8, Cys11, Cys27, and Cys31. The interval 43-65 (SYRIPDTGKDSEKQENDPSGSEK) is disordered. The span at 48 to 65 (DTGKDSEKQENDPSGSEK) shows a compositional bias: basic and acidic residues.

Belongs to the DNA gyrase inhibitor YacG family. In terms of assembly, interacts with GyrB. Zn(2+) serves as cofactor.

Its function is as follows. Inhibits all the catalytic activities of DNA gyrase by preventing its interaction with DNA. Acts by binding directly to the C-terminal domain of GyrB, which probably disrupts DNA binding by the gyrase. This Nitrosospira multiformis (strain ATCC 25196 / NCIMB 11849 / C 71) protein is DNA gyrase inhibitor YacG.